Consider the following 118-residue polypeptide: Large ribosomal subunit protein eL18 (118 aa).

It belongs to the eukaryotic ribosomal protein eL18 family.

The chain is Large ribosomal subunit protein eL18 from Sulfurisphaera tokodaii (strain DSM 16993 / JCM 10545 / NBRC 100140 / 7) (Sulfolobus tokodaii).